A 381-amino-acid polypeptide reads, in one-letter code: Queuine tRNA-ribosyltransferase (381 aa).

The active-site Proton acceptor is the Asp89. Substrate is bound by residues 89 to 93 (DSGGF), Asp143, Gln187, and Gly214. The segment at 245 to 251 (GVGKPED) is RNA binding. The Nucleophile role is filled by Asp264. The tract at residues 269–273 (TRNAR) is RNA binding; important for wobble base 34 recognition. Cys302, Cys304, Cys307, and His333 together coordinate Zn(2+).

It belongs to the queuine tRNA-ribosyltransferase family. As to quaternary structure, homodimer. Within each dimer, one monomer is responsible for RNA recognition and catalysis, while the other monomer binds to the replacement base PreQ1. The cofactor is Zn(2+).

The catalysed reaction is 7-aminomethyl-7-carbaguanine + guanosine(34) in tRNA = 7-aminomethyl-7-carbaguanosine(34) in tRNA + guanine. Its pathway is tRNA modification; tRNA-queuosine biosynthesis. Catalyzes the base-exchange of a guanine (G) residue with the queuine precursor 7-aminomethyl-7-deazaguanine (PreQ1) at position 34 (anticodon wobble position) in tRNAs with GU(N) anticodons (tRNA-Asp, -Asn, -His and -Tyr). Catalysis occurs through a double-displacement mechanism. The nucleophile active site attacks the C1' of nucleotide 34 to detach the guanine base from the RNA, forming a covalent enzyme-RNA intermediate. The proton acceptor active site deprotonates the incoming PreQ1, allowing a nucleophilic attack on the C1' of the ribose to form the product. After dissociation, two additional enzymatic reactions on the tRNA convert PreQ1 to queuine (Q), resulting in the hypermodified nucleoside queuosine (7-(((4,5-cis-dihydroxy-2-cyclopenten-1-yl)amino)methyl)-7-deazaguanosine). The chain is Queuine tRNA-ribosyltransferase from Pectobacterium atrosepticum (strain SCRI 1043 / ATCC BAA-672) (Erwinia carotovora subsp. atroseptica).